The primary structure comprises 123 residues: uncharacterized protein (123 aa).

Positions Met-1–Ala-20 are cleaved as a signal peptide.

This is an uncharacterized protein from Mycobacterium bovis (strain ATCC BAA-935 / AF2122/97).